A 93-amino-acid chain; its full sequence is MDGIKYAVFTEKSLRLLGKNQYTFNVESGFTKTEIKHWVELFFGVKVVAVNSHRLPGKGRRMGPILGHTMHYRRMIITLQPGYSIPLLDREKN.

Belongs to the universal ribosomal protein uL23 family. Part of the 50S ribosomal subunit.

The protein resides in the plastid. It localises to the chloroplast. Functionally, binds to 23S rRNA. The protein is Large ribosomal subunit protein uL23cz/uL23cy (rpl23-A) of Oryza nivara (Indian wild rice).